The sequence spans 281 residues: Auxin-responsive protein IAA19 (281 aa).

Positions 40–44 (LRLGL) match the EAR-like (transcriptional repression) motif. Positions 66 to 126 (LGPAPPPRGG…AAGAPRAAKA (61 aa)) are disordered. Over residues 79–91 (GFVDSLDRSEGRR) the composition is skewed to basic and acidic residues. Low complexity predominate over residues 114 to 126 (GEAAAGAPRAAKA). The PB1 domain maps to 161–265 (CCYVKVSMDG…RKLRIMRGSD (105 aa)).

It belongs to the Aux/IAA family. In terms of assembly, homodimers and heterodimers. In terms of tissue distribution, expressed in etiolated seedlings and flowers.

The protein localises to the nucleus. In terms of biological role, aux/IAA proteins are short-lived transcriptional factors that function as repressors of early auxin response genes at low auxin concentrations. The protein is Auxin-responsive protein IAA19 (IAA19) of Oryza sativa subsp. japonica (Rice).